The primary structure comprises 118 residues: Lutropin subunit beta (118 aa).

6 cysteine pairs are disulfide-bonded: Cys-9–Cys-57, Cys-23–Cys-72, Cys-26–Cys-110, Cys-34–Cys-88, Cys-38–Cys-90, and Cys-93–Cys-100. A glycan (N-linked (GlcNAc...) asparagine) is linked at Asn-13.

This sequence belongs to the glycoprotein hormones subunit beta family. As to quaternary structure, heterodimer of a common alpha chain and a unique beta chain which confers biological specificity to thyrotropin, lutropin, follitropin and gonadotropin.

Its subcellular location is the secreted. In terms of biological role, promotes spermatogenesis and ovulation by stimulating the testes and ovaries to synthesize steroids. The protein is Lutropin subunit beta (LHB) of Balaenoptera acutorostrata (Common minke whale).